The chain runs to 695 residues: G-patch and R3H domain-containing protein C30B4.02c (695 aa).

Disordered regions lie at residues 168-200 (SDKEISSTEESEQLCYKEQESEKELYSKDNDDS), 213-242 (DIANNNAAPPPPLAQAQEQLSTENEDEFDI), 257-317 (FADL…FDEG), 332-351 (GNTDSLAEDEDDILEEDEDE), 388-448 (DSED…VAAR), and 475-517 (DKSK…DSDN). Residues 182–198 (CYKEQESEKELYSKDND) show a composition bias toward basic and acidic residues. Acidic residues-rich tracts occupy residues 262 to 286 (VLEEDDDDEDEDEELEGEKEEEEEE), 307 to 317 (EDSESLEFDEG), and 337 to 351 (LAEDEDDILEEDEDE). The span at 421 to 434 (KKDRKLPKKMRKAQ) shows a compositional bias: basic residues. One can recognise an R3H domain in the interval 525 to 587 (KIFINDVYQR…KRYTMLSKTH (63 aa)). In terms of domain architecture, G-patch spans 652–695 (KENPGRRLLEKLGWYAGKGLGHPENEGSKDSLRAIVKVSRSGLG).

The protein resides in the cytoplasm. This Schizosaccharomyces pombe (strain 972 / ATCC 24843) (Fission yeast) protein is G-patch and R3H domain-containing protein C30B4.02c.